A 99-amino-acid polypeptide reads, in one-letter code: Small ribosomal subunit protein bS20 (99 aa).

The span at 1-20 shows a compositional bias: basic residues; the sequence is MASAKPKKKNPRLASGRKRV. Residues 1 to 21 are disordered; sequence MASAKPKKKNPRLASGRKRVR.

It belongs to the bacterial ribosomal protein bS20 family.

Binds directly to 16S ribosomal RNA. The protein is Small ribosomal subunit protein bS20 of Verminephrobacter eiseniae (strain EF01-2).